The chain runs to 99 residues: Essential MCU regulator, mitochondrial (99 aa).

Residues 1-39 constitute a mitochondrion transit peptide; sequence MAARVGVLSVAGFRAAARAGGLLRASKQSSAVSHVPCRT. Topologically, residues 40–57 are mitochondrial matrix; that stretch reads AIATSAGTVLPKPEKVSF. The helical transmembrane segment at 58-77 threads the bilayer; it reads GLLRVFTVVIPFLYIGTLIS. At 78-99 the chain is on the mitochondrial intermembrane side; sequence KNFAALLEEHDIFVPEDDDDDD.

The protein belongs to the SMDT1/EMRE family. In terms of assembly, component of the uniplex complex.

It localises to the mitochondrion inner membrane. Essential regulatory subunit of the mitochondrial calcium uniporter complex (uniplex), a complex that mediates calcium uptake into mitochondria. Required to bridge the calcium-sensing proteins micu1 with the calcium-conducting subunit mcu. Acts by mediating activation of mcu and retention of micu1 to the mcu pore, in order to ensure tight regulation of the uniplex complex and appropriate responses to intracellular calcium signaling. The sequence is that of Essential MCU regulator, mitochondrial from Xenopus tropicalis (Western clawed frog).